The following is a 295-amino-acid chain: Urease accessory protein UreD (295 aa).

It belongs to the UreD family. In terms of assembly, ureD, UreF and UreG form a complex that acts as a GTP-hydrolysis-dependent molecular chaperone, activating the urease apoprotein by helping to assemble the nickel containing metallocenter of UreC. The UreE protein probably delivers the nickel.

Its subcellular location is the cytoplasm. Functionally, required for maturation of urease via the functional incorporation of the urease nickel metallocenter. The protein is Urease accessory protein UreD of Ralstonia nicotianae (strain ATCC BAA-1114 / GMI1000) (Ralstonia solanacearum).